The primary structure comprises 148 residues: Large ribosomal subunit protein bL9 (148 aa).

The protein belongs to the bacterial ribosomal protein bL9 family.

Its function is as follows. Binds to the 23S rRNA. In Geobacter metallireducens (strain ATCC 53774 / DSM 7210 / GS-15), this protein is Large ribosomal subunit protein bL9.